Here is a 348-residue protein sequence, read N- to C-terminus: UDP-N-acetylglucosamine--N-acetylmuramyl-(pentapeptide) pyrophosphoryl-undecaprenol N-acetylglucosamine transferase (348 aa).

UDP-N-acetyl-alpha-D-glucosamine is bound by residues 11 to 13 (TGG), Asn120, Arg161, Ser187, and Gln281.

This sequence belongs to the glycosyltransferase 28 family. MurG subfamily.

The protein resides in the cell inner membrane. The enzyme catalyses di-trans,octa-cis-undecaprenyl diphospho-N-acetyl-alpha-D-muramoyl-L-alanyl-D-glutamyl-meso-2,6-diaminopimeloyl-D-alanyl-D-alanine + UDP-N-acetyl-alpha-D-glucosamine = di-trans,octa-cis-undecaprenyl diphospho-[N-acetyl-alpha-D-glucosaminyl-(1-&gt;4)]-N-acetyl-alpha-D-muramoyl-L-alanyl-D-glutamyl-meso-2,6-diaminopimeloyl-D-alanyl-D-alanine + UDP + H(+). The protein operates within cell wall biogenesis; peptidoglycan biosynthesis. Cell wall formation. Catalyzes the transfer of a GlcNAc subunit on undecaprenyl-pyrophosphoryl-MurNAc-pentapeptide (lipid intermediate I) to form undecaprenyl-pyrophosphoryl-MurNAc-(pentapeptide)GlcNAc (lipid intermediate II). The polypeptide is UDP-N-acetylglucosamine--N-acetylmuramyl-(pentapeptide) pyrophosphoryl-undecaprenol N-acetylglucosamine transferase (Crocosphaera subtropica (strain ATCC 51142 / BH68) (Cyanothece sp. (strain ATCC 51142))).